Consider the following 123-residue polypeptide: Large ribosomal subunit protein bL12 (123 aa).

Belongs to the bacterial ribosomal protein bL12 family. Homodimer. Part of the ribosomal stalk of the 50S ribosomal subunit. Forms a multimeric L10(L12)X complex, where L10 forms an elongated spine to which 2 to 4 L12 dimers bind in a sequential fashion. Binds GTP-bound translation factors.

In terms of biological role, forms part of the ribosomal stalk which helps the ribosome interact with GTP-bound translation factors. Is thus essential for accurate translation. This chain is Large ribosomal subunit protein bL12, found in Hydrogenovibrio crunogenus (strain DSM 25203 / XCL-2) (Thiomicrospira crunogena).